An 898-amino-acid polypeptide reads, in one-letter code: DNA-directed DNA polymerase (898 aa).

Positions 101–337 (YDRKFVRVAN…VQAIDKIRGF (237 aa)) are 3'-5'exonuclease. Residues Asp112, Glu114, and Asp219 each coordinate Mg(2+). The tract at residues 245–261 (VKSKLIQNMYGSKEIYS) is beta hairpin. Positions 324, 408, and 409 each coordinate Mg(2+). A polymerase region spans residues 377 to 898 (IPQQGSHVKQ…EKASLDFLFG (522 aa)). Substrate is bound by residues 411 to 413 (SLY), Arg479, and Lys557. Asp620 serves as a coordination point for Mg(2+). The segment at 702 to 705 (KKRY) is binding of DNA in B-conformation. An interaction with the polymerase clamp region spans residues 893 to 898 (LDFLFG).

It belongs to the DNA polymerase type-B family. In terms of assembly, interacts with the polymerase clamp; this interaction constitutes the polymerase holoenzyme. Interacts with the helicase assembly factor. Part of the replicase complex that includes the DNA polymerase, the polymerase clamp, the clamp loader complex, the single-stranded DNA binding protein, the primase, the helicase and the helicase assembly factor. Requires Mg(2+) as cofactor.

The enzyme catalyses DNA(n) + a 2'-deoxyribonucleoside 5'-triphosphate = DNA(n+1) + diphosphate. Its function is as follows. Replicates the viral genomic DNA. This polymerase possesses two enzymatic activities: DNA synthesis (polymerase) and an exonucleolytic activity that degrades single-stranded DNA in the 3'- to 5'-direction for proofreading purpose. This chain is DNA-directed DNA polymerase (43), found in Enterobacteria phage T4 (Bacteriophage T4).